Here is a 427-residue protein sequence, read N- to C-terminus: Peptidase B (427 aa).

Mn(2+) is bound by residues Lys-195 and Asp-200. Lys-207 is an active-site residue. Residues Asp-218, Asp-277, and Glu-279 each coordinate Mn(2+). The active site involves Arg-281.

It belongs to the peptidase M17 family. As to quaternary structure, homohexamer. Mn(2+) is required as a cofactor.

Its subcellular location is the cytoplasm. It catalyses the reaction Release of an N-terminal amino acid, Xaa, from a peptide or arylamide. Xaa is preferably Glu or Asp but may be other amino acids, including Leu, Met, His, Cys and Gln.. Probably plays an important role in intracellular peptide degradation. The sequence is that of Peptidase B from Salmonella agona (strain SL483).